Here is a 308-residue protein sequence, read N- to C-terminus: UPF0282 protein YG5714_2245 (308 aa).

It belongs to the UPF0282 family.

This chain is UPF0282 protein YG5714_2245, found in Saccharolobus islandicus (strain Y.G.57.14 / Yellowstone #1) (Sulfolobus islandicus).